The primary structure comprises 583 residues: cAMP-dependent protein kinase catalytic subunit 3 (583 aa).

2 disordered regions span residues 51 to 75 (ATPT…TIGK) and 98 to 264 (SGTA…QTAK). Polar residues-rich tracts occupy residues 52 to 69 (TPTQ…TGTP) and 98 to 107 (SGTAGSTSKL). Over residues 108–162 (TTGNGSGNTMTSAYKIPSNNSTTANDSSNTETTFTFKLGRSNGRSSSNVASSESS) the composition is skewed to low complexity. Over residues 163–176 (DPLESDYSEEDPEQ) the composition is skewed to acidic residues. The span at 181-200 (PDPATNSRSSSTATTTTTSS) shows a compositional bias: low complexity. Residues 205–219 (NDVDEEDEEDDENEG) show a composition bias toward acidic residues. Positions 221–234 (GNGRDADDATHDSS) are enriched in basic and acidic residues. The segment covering 235–256 (ESIEEDDGNETDDEEDDDESEE) has biased composition (acidic residues). The region spanning 274–528 (YQIIKTVGTG…ADDVKRHRWF (255 aa)) is the Protein kinase domain. ATP contacts are provided by residues 280–288 (VGTGTFGRV) and lysine 303. The Proton acceptor role is filled by aspartate 397. The region spanning 529 to 583 (KHLNWNDVYSKKLKPPILPDVHHDGDTKNFDDYPEKDWKPAKAVDQRDLQYFNDF) is the AGC-kinase C-terminal domain.

This sequence belongs to the protein kinase superfamily. AGC Ser/Thr protein kinase family. cAMP subfamily. As to expression, expressed in embryonic mesoderm, and the optic lamina, wing disk and leg disks of third instar larvae. More abundant in adult head than adult body.

The catalysed reaction is L-seryl-[protein] + ATP = O-phospho-L-seryl-[protein] + ADP + H(+). The enzyme catalyses L-threonyl-[protein] + ATP = O-phospho-L-threonyl-[protein] + ADP + H(+). Functionally, does not have an essential role in development. In Drosophila melanogaster (Fruit fly), this protein is cAMP-dependent protein kinase catalytic subunit 3 (Pka-C3).